We begin with the raw amino-acid sequence, 203 residues long: MAERFRGYLPVVVDVETGGFNSATDALLEIAAVTIGMDEKGFLFPEHTYFHRVEPFEGANIEPAALEFTGIKLDHPLRMAVSEESAMTDIFRGVRKALKANGCKRAILVGHNSSFDLGFLNAAVARNDLKRNPFHPFSSFDTATLAGLAYGQTVLARACQSADIDFDGREAHSARYDTEKTAELFCGIVNRWKEMGGWRDFND.

The region spanning 11–185 (VVVDVETGGF…YDTEKTAELF (175 aa)) is the Exonuclease domain. Positions 14, 16, 172, and 177 each coordinate Mg(2+). H172 acts as the Proton donor/acceptor in catalysis.

It belongs to the RNase T family. As to quaternary structure, homodimer. Mg(2+) serves as cofactor.

Functionally, trims short 3' overhangs of a variety of RNA species, leaving a one or two nucleotide 3' overhang. Responsible for the end-turnover of tRNA: specifically removes the terminal AMP residue from uncharged tRNA (tRNA-C-C-A). Also appears to be involved in tRNA biosynthesis. This Pseudomonas putida (strain ATCC 47054 / DSM 6125 / CFBP 8728 / NCIMB 11950 / KT2440) protein is Ribonuclease T.